Reading from the N-terminus, the 375-residue chain is Succinyl-diaminopimelate desuccinylase (375 aa).

Residue His66 coordinates Zn(2+). The active site involves Asp68. Asp99 is a binding site for Zn(2+). The active-site Proton acceptor is Glu133. Residues Glu134, Glu162, and His348 each coordinate Zn(2+).

The protein belongs to the peptidase M20A family. DapE subfamily. Homodimer. Zn(2+) serves as cofactor. Co(2+) is required as a cofactor.

It carries out the reaction N-succinyl-(2S,6S)-2,6-diaminopimelate + H2O = (2S,6S)-2,6-diaminopimelate + succinate. Its pathway is amino-acid biosynthesis; L-lysine biosynthesis via DAP pathway; LL-2,6-diaminopimelate from (S)-tetrahydrodipicolinate (succinylase route): step 3/3. In terms of biological role, catalyzes the hydrolysis of N-succinyl-L,L-diaminopimelic acid (SDAP), forming succinate and LL-2,6-diaminopimelate (DAP), an intermediate involved in the bacterial biosynthesis of lysine and meso-diaminopimelic acid, an essential component of bacterial cell walls. The protein is Succinyl-diaminopimelate desuccinylase of Buchnera aphidicola subsp. Acyrthosiphon pisum (strain 5A).